The chain runs to 313 residues: Protein-methionine-sulfoxide reductase catalytic subunit MsrP (313 aa).

Residues 1–44 (MARWRPDMAEREATPEALYLRRREFLALGAAGAVGLLVARGARA) constitute a signal peptide (tat-type signal). Mo-molybdopterin-binding positions include asparagine 76, 79-80 (YE), cysteine 134, threonine 169, asparagine 217, arginine 222, and 233-235 (GAK).

Belongs to the MsrP family. In terms of assembly, heterodimer of a catalytic subunit (MsrP) and a heme-binding subunit (MsrQ). Mo-molybdopterin serves as cofactor. Post-translationally, predicted to be exported by the Tat system. The position of the signal peptide cleavage has not been experimentally proven.

It localises to the periplasm. The catalysed reaction is L-methionyl-[protein] + a quinone + H2O = L-methionyl-(S)-S-oxide-[protein] + a quinol. The enzyme catalyses L-methionyl-[protein] + a quinone + H2O = L-methionyl-(R)-S-oxide-[protein] + a quinol. Part of the MsrPQ system that repairs oxidized periplasmic proteins containing methionine sulfoxide residues (Met-O), using respiratory chain electrons. Thus protects these proteins from oxidative-stress damage caused by reactive species of oxygen and chlorine generated by the host defense mechanisms. MsrPQ is essential for the maintenance of envelope integrity under bleach stress, rescuing a wide series of structurally unrelated periplasmic proteins from methionine oxidation. The catalytic subunit MsrP is non-stereospecific, being able to reduce both (R-) and (S-) diastereoisomers of methionine sulfoxide. The polypeptide is Protein-methionine-sulfoxide reductase catalytic subunit MsrP (Anaeromyxobacter sp. (strain K)).